Reading from the N-terminus, the 135-residue chain is UPF0738 protein Aflv_2116 (135 aa).

The protein belongs to the UPF0738 family.

The polypeptide is UPF0738 protein Aflv_2116 (Anoxybacillus flavithermus (strain DSM 21510 / WK1)).